Here is a 72-residue protein sequence, read N- to C-terminus: Conotoxin Lt6.3 (72 aa).

A signal peptide spans 1–22 (MKLTSVVIVAVLFLAACQLTTS). The propeptide occupies 23–46 (DGSRGTWKDRAVRSITKVSMLRWP). Disulfide bonds link cysteine 47-cysteine 61, cysteine 54-cysteine 64, and cysteine 60-cysteine 71.

It belongs to the conotoxin O1 superfamily. In terms of tissue distribution, expressed by the venom duct.

It localises to the secreted. This chain is Conotoxin Lt6.3, found in Conus litteratus (Lettered cone).